The primary structure comprises 398 residues: 2-epi-5-epi-valiolone synthase (398 aa).

NAD(+) is bound by residues aspartate 62, 93–96 (ETVK), 126–130 (GVLMD), 150–151 (TT), lysine 163, lysine 172, and 190–193 (FLAT). Residue lysine 163 is part of the active site. Residues glutamate 205, histidine 276, and histidine 292 each contribute to the a divalent metal cation site.

It belongs to the sugar phosphate cyclases superfamily. EEVS family. It depends on NAD(+) as a cofactor. Requires Co(2+) as cofactor.

It catalyses the reaction D-sedoheptulose 7-phosphate = 2-epi-5-epi-valiolone + phosphate. Its function is as follows. Catalyzes the cyclization of D-sedoheptulose 7-phosphate to 2-epi-5-epi-valiolone. Does not use ido-heptulose 7-phosphate and 3-deoxy-arabino-heptulosonate 7-phosphate. Involved in the biosynthesis of the acarviose moiety of the alpha-glucosidase inhibitor acarbose. The sequence is that of 2-epi-5-epi-valiolone synthase from Actinoplanes sp. (strain ATCC 31044 / CBS 674.73 / SE50/110).